We begin with the raw amino-acid sequence, 295 residues long: Nitrogenase iron protein 1 (295 aa).

Position 13-20 (13-20) interacts with ATP; sequence GKGGIGKS. C101 is a [4Fe-4S] cluster binding site. ADP-ribosylarginine; by dinitrogenase reductase ADP-ribosyltransferase is present on R104. A [4Fe-4S] cluster-binding site is contributed by C135.

It belongs to the NifH/BchL/ChlL family. In terms of assembly, homodimer. [4Fe-4S] cluster serves as cofactor. In terms of processing, the reversible ADP-ribosylation of Arg-104 inactivates the nitrogenase reductase and regulates nitrogenase activity.

The catalysed reaction is N2 + 8 reduced [2Fe-2S]-[ferredoxin] + 16 ATP + 16 H2O = H2 + 8 oxidized [2Fe-2S]-[ferredoxin] + 2 NH4(+) + 16 ADP + 16 phosphate + 6 H(+). The key enzymatic reactions in nitrogen fixation are catalyzed by the nitrogenase complex, which has 2 components: the iron protein and the molybdenum-iron protein. The chain is Nitrogenase iron protein 1 (nifH1) from Nostoc sp. (strain PCC 7120 / SAG 25.82 / UTEX 2576).